The primary structure comprises 117 residues: Large ribosomal subunit protein bL20 (117 aa).

This sequence belongs to the bacterial ribosomal protein bL20 family.

Functionally, binds directly to 23S ribosomal RNA and is necessary for the in vitro assembly process of the 50S ribosomal subunit. It is not involved in the protein synthesizing functions of that subunit. The protein is Large ribosomal subunit protein bL20 of Actinobacillus succinogenes (strain ATCC 55618 / DSM 22257 / CCUG 43843 / 130Z).